The primary structure comprises 385 residues: MDEIINKYQAVEKLFKEIQEGLAAYDQYKTLISELLHYNNHIKQEYFNFLMIISPYLIRAHSGETLRNKVNNEIKRLILVENINTKISKTLVSVNFLLQKKLSADGMKTKNMWCTNNPMLQVRTAHNLFKQLCDTQSKTQWVQTLKYKECKYCHTDMVFNTTQFGLQCPNCGCIQELMGTIFDETHFYNHDGQKAKSGIFNPNRHYRFWIEHILGRNSEQELGTKQDPCGTKVLQQLKKIIKRDNKCIALLTVENIRKMLKEINRTDLNNCVSLILRKLTGVGPPQISESILLRGEYIFTEAIKIREKVCKKGRINRNYYPYYIYKIFDAILPPNDTTNRRILQYIHLQGNDTLANNDSEWESICMELPEIKWKPTDRTHCVHFF.

The C2H2-type zinc-finger motif lies at 166–190; the sequence is LQCPNCGCIQELMGTIFDETHFYNH.

Belongs to the asfivirus B385R family.

This Ornithodoros (relapsing fever ticks) protein is Zinc finger protein B385R.